The chain runs to 445 residues: Flagellum-associated coiled-coil domain-containing protein 1 (445 aa).

A disordered region spans residues 26 to 47; that stretch reads PQLPRKNSTGSSKLTPLVPAPK. A compositionally biased stretch (polar residues) spans 30-39; sequence RKNSTGSSKL. 2 coiled-coil regions span residues 122–226 and 283–315; these read SRTN…TYQD and AVFE…TKEV. N6-acetyllysine is present on lysine 376. The stretch at 387–414 forms a coiled coil; sequence EKYKHTIQILTEENIHLKQKIISKNEEI.

It localises to the cytoplasm. Its subcellular location is the cytoplasmic granule. The protein resides in the cell projection. It is found in the cilium. The protein localises to the flagellum. This chain is Flagellum-associated coiled-coil domain-containing protein 1, found in Homo sapiens (Human).